The sequence spans 131 residues: Phosphoribosyl-AMP cyclohydrolase (131 aa).

D80 is a Mg(2+) binding site. A Zn(2+)-binding site is contributed by C81. Residues D82 and D84 each coordinate Mg(2+). Positions 98 and 105 each coordinate Zn(2+).

This sequence belongs to the PRA-CH family. As to quaternary structure, homodimer. It depends on Mg(2+) as a cofactor. Requires Zn(2+) as cofactor.

Its subcellular location is the cytoplasm. It carries out the reaction 1-(5-phospho-beta-D-ribosyl)-5'-AMP + H2O = 1-(5-phospho-beta-D-ribosyl)-5-[(5-phospho-beta-D-ribosylamino)methylideneamino]imidazole-4-carboxamide. It participates in amino-acid biosynthesis; L-histidine biosynthesis; L-histidine from 5-phospho-alpha-D-ribose 1-diphosphate: step 3/9. Its function is as follows. Catalyzes the hydrolysis of the adenine ring of phosphoribosyl-AMP. In Azoarcus sp. (strain BH72), this protein is Phosphoribosyl-AMP cyclohydrolase.